A 504-amino-acid polypeptide reads, in one-letter code: Signal transduction histidine-protein kinase/phosphatase MprB (504 aa).

At 1 to 26 (MWWFRRRDRAPLRATSSLSLRWRVML) the chain is on the cytoplasmic side. The chain crosses the membrane as a helical span at residues 27-47 (LAMSMVAMVVVLMSFAVYAVI). Over 48–163 (SAALYSDIDN…PTEAVMNKLR (116 aa)) the chain is Extracellular. The chain crosses the membrane as a helical span at residues 164-184 (WVLLIVGGIGVAVAAVAGGMV). Residues 185 to 504 (TRAGLRPVGR…SVESQSTRAT (320 aa)) lie on the Cytoplasmic side of the membrane. The 53-residue stretch at 186-238 (RAGLRPVGRLTEAAERVARTDDLRPIPVFGSDELARLTEAFNLMLRALAESRE) folds into the HAMP domain. The Histidine kinase domain maps to 246–466 (DAGHELRTPL…SIYVLLPGRR (221 aa)). His249 carries the phosphohistidine; by autocatalysis modification. Positions 471–504 (QLPGATAGARSTDIENSRGSANVISVESQSTRAT) are disordered. A compositionally biased stretch (polar residues) spans 487–504 (SRGSANVISVESQSTRAT).

Requires Mg(2+) as cofactor. Mn(2+) is required as a cofactor. Post-translationally, autophosphorylated.

Its subcellular location is the cell membrane. The catalysed reaction is ATP + protein L-histidine = ADP + protein N-phospho-L-histidine.. In terms of biological role, member of the two-component regulatory system MprB/MprA which contributes to maintaining a balance among several systems involved in stress resistance and is required for establishment and maintenance of persistent infection in the host. In response to environmental signals MprB acts both as a membrane-associated protein kinase that undergoes autophosphorylation and subsequently transfers the phosphate to MprA, and a protein phosphatase that dephosphorylates phospho-MprA. MprB/MprA up-regulates expression of mprA and pepD. The protein is Signal transduction histidine-protein kinase/phosphatase MprB (mprB) of Mycobacterium bovis (strain ATCC BAA-935 / AF2122/97).